A 386-amino-acid polypeptide reads, in one-letter code: Dual-specificity RNA methyltransferase RlmN (386 aa).

Glu-96 functions as the Proton acceptor in the catalytic mechanism. The 239-residue stretch at 102–340 (ENDRATLCVS…VITRRTRGED (239 aa)) folds into the Radical SAM core domain. Cys-109 and Cys-345 form a disulfide bridge. [4Fe-4S] cluster-binding residues include Cys-116, Cys-120, and Cys-123. Residues 170-171 (GE), Ser-202, 224-226 (SIH), and Asn-302 contribute to the S-adenosyl-L-methionine site. Cys-345 functions as the S-methylcysteine intermediate in the catalytic mechanism.

It belongs to the radical SAM superfamily. RlmN family. Requires [4Fe-4S] cluster as cofactor.

It is found in the cytoplasm. The enzyme catalyses adenosine(2503) in 23S rRNA + 2 reduced [2Fe-2S]-[ferredoxin] + 2 S-adenosyl-L-methionine = 2-methyladenosine(2503) in 23S rRNA + 5'-deoxyadenosine + L-methionine + 2 oxidized [2Fe-2S]-[ferredoxin] + S-adenosyl-L-homocysteine. The catalysed reaction is adenosine(37) in tRNA + 2 reduced [2Fe-2S]-[ferredoxin] + 2 S-adenosyl-L-methionine = 2-methyladenosine(37) in tRNA + 5'-deoxyadenosine + L-methionine + 2 oxidized [2Fe-2S]-[ferredoxin] + S-adenosyl-L-homocysteine. Specifically methylates position 2 of adenine 2503 in 23S rRNA and position 2 of adenine 37 in tRNAs. m2A2503 modification seems to play a crucial role in the proofreading step occurring at the peptidyl transferase center and thus would serve to optimize ribosomal fidelity. The sequence is that of Dual-specificity RNA methyltransferase RlmN from Colwellia psychrerythraea (strain 34H / ATCC BAA-681) (Vibrio psychroerythus).